The chain runs to 641 residues: FAD-binding monooxygenase ausB (641 aa).

A disordered region spans residues 1–68 (MAIGPKPESI…DSTTNVPYSL (68 aa)). The span at 49-68 (WLTSTDQPQPDSTTNVPYSL) shows a compositional bias: polar residues. FAD is bound by residues 115–118 (TWYW), 127–128 (DI), and Y133. 125–127 (MCD) lines the NADP(+) pocket. NADP(+) contacts are provided by residues 272–278 (TGSTAVQ) and 295–296 (RT).

The protein belongs to the FAD-binding monooxygenase family. FAD serves as cofactor.

It catalyses the reaction protoaustinoid A + AH2 + O2 = berkeleyone A + A + H2O. It functions in the pathway secondary metabolite biosynthesis; terpenoid biosynthesis. In terms of biological role, FAD-binding monooxygenase; part of the gene cluster A that mediates the biosynthesis of the fungal meroterpenoid acetoxydehydroaustin. The first step of the pathway is the synthesis of 3,5-dimethylorsellinic acid by the polyketide synthase ausA. 3,5-dimethylorsellinic acid is then prenylated by the polyprenyl transferase ausN. Further epoxidation by the FAD-dependent monooxygenase ausM and cyclization by the probable terpene cyclase ausL lead to the formation of protoaustinoid A. Protoaustinoid A is then oxidized to spiro-lactone preaustinoid A3 by the combined action of the FAD-binding monooxygenases ausB and ausC, and the dioxygenase ausE. Acid-catalyzed keto-rearrangement and ring contraction of the tetraketide portion of preaustinoid A3 by ausJ lead to the formation of preaustinoid A4. The aldo-keto reductase ausK, with the help of ausH, is involved in the next step by transforming preaustinoid A4 into isoaustinone which is in turn hydroxylated by the P450 monooxygenase ausI to form austinolide. The cytochrome P450 monooxygenase ausG then modifies austinolide to austinol. Austinol is further acetylated to austin by the O-acetyltransferase ausP, which spontaneously changes to dehydroaustin. The cytochrome P450 monooxygenase then converts dehydroaustin is into 7-dehydrodehydroaustin. The hydroxylation catalyzed by ausR permits the second O-acetyltransferase ausQ to add an additional acetyl group to the molecule, leading to the formation of acetoxydehydroaustin. Due to genetic rearrangements of the clusters and the subsequent loss of some enzymes, the end product of the Penicillium brasilianum austinoid biosynthesis clusters is acetoxydehydroaustin. The sequence is that of FAD-binding monooxygenase ausB from Penicillium brasilianum.